The following is a 54-amino-acid chain: Potassium channel toxin alpha-KTx 14.x (54 aa).

The first 23 residues, M1–G23, serve as a signal peptide directing secretion. Disulfide bonds link C30-C46, C36-C51, and C40-C53.

Belongs to the short scorpion toxin superfamily. Potassium channel inhibitor family. Alpha-KTx 14 subfamily. Expressed by the venom gland.

The protein localises to the secreted. Functionally, potassium channels inhibitor. In Olivierus martensii (Manchurian scorpion), this protein is Potassium channel toxin alpha-KTx 14.x.